Here is a 130-residue protein sequence, read N- to C-terminus: Bet1-like SNARE 1-2 (130 aa).

Residues 1–106 (MNFRRENRAS…EKKSNRKSCK (106 aa)) lie on the Cytoplasmic side of the membrane. In terms of domain architecture, t-SNARE coiled-coil homology spans 33–95 (AHDERDNDEA…SGTINRFKLV (63 aa)). A coiled-coil region spans residues 40 to 82 (DEALENLQDRVSFLKRVTGDIHEEVENHNRLLDKVGNKMDSAR). The chain crosses the membrane as a helical; Anchor for type IV membrane protein span at residues 107–122 (LIAYFVLLFLIMYYLI). The Vesicular portion of the chain corresponds to 123–130 (RLLNYIKG).

Belongs to the BET1 family.

The protein localises to the golgi apparatus membrane. It is found in the endoplasmic reticulum membrane. Functionally, required for vesicular transport from the ER to the Golgi complex. Functions as a SNARE associated with ER-derived vesicles. This is Bet1-like SNARE 1-2 (BET12) from Arabidopsis thaliana (Mouse-ear cress).